The sequence spans 434 residues: Trigger factor (434 aa).

The PPIase FKBP-type domain occupies Glu161 to Pro246.

This sequence belongs to the FKBP-type PPIase family. Tig subfamily.

It is found in the cytoplasm. The catalysed reaction is [protein]-peptidylproline (omega=180) = [protein]-peptidylproline (omega=0). Its function is as follows. Involved in protein export. Acts as a chaperone by maintaining the newly synthesized protein in an open conformation. Functions as a peptidyl-prolyl cis-trans isomerase. The chain is Trigger factor from Yersinia enterocolitica serotype O:8 / biotype 1B (strain NCTC 13174 / 8081).